Here is a 706-residue protein sequence, read N- to C-terminus: Translation initiation factor IF-2 (706 aa).

Over residues 55–81 (AKETANEKPAEQKKQSSNKINDRKKND) the composition is skewed to basic and acidic residues. A disordered region spans residues 55-127 (AKETANEKPA…KPKKELPEKI (73 aa)). Low complexity predominate over residues 82 to 98 (VQNNQFNKNKKNNNQNK). The tr-type G domain maps to 207 to 376 (VRPPVVTIMG…LLVSEVGELK (170 aa)). Residues 216 to 223 (GHVDHGKT) are G1. 216–223 (GHVDHGKT) serves as a coordination point for GTP. Residues 241 to 245 (GITQH) are G2. Residues 262 to 265 (DTPG) form a G3 region. GTP-binding positions include 262–266 (DTPGH) and 316–319 (NKID). The interval 316-319 (NKID) is G4. A G5 region spans residues 352–354 (SAK).

It belongs to the TRAFAC class translation factor GTPase superfamily. Classic translation factor GTPase family. IF-2 subfamily.

The protein resides in the cytoplasm. Functionally, one of the essential components for the initiation of protein synthesis. Protects formylmethionyl-tRNA from spontaneous hydrolysis and promotes its binding to the 30S ribosomal subunits. Also involved in the hydrolysis of GTP during the formation of the 70S ribosomal complex. In Bacillus pumilus (strain SAFR-032), this protein is Translation initiation factor IF-2.